The sequence spans 128 residues: 2-iminobutanoate/2-iminopropanoate deaminase (128 aa).

The protein belongs to the RutC family.

The protein resides in the cytoplasm. The catalysed reaction is 2-iminobutanoate + H2O = 2-oxobutanoate + NH4(+). It carries out the reaction 2-iminopropanoate + H2O = pyruvate + NH4(+). Its function is as follows. Catalyzes the hydrolytic deamination of enamine/imine intermediates that form during the course of normal metabolism. May facilitate the release of ammonia from these potentially toxic reactive metabolites, reducing their impact on cellular components. It may act on enamine/imine intermediates formed by several types of pyridoxal-5'-phosphate-dependent dehydratases including L-threonine dehydratase. Preferentially digests Leu and Met in cooperation with L-amino acid oxidase, but digests Phe poorly. This is 2-iminobutanoate/2-iminopropanoate deaminase from Dermatophagoides farinae (American house dust mite).